The sequence spans 351 residues: SH3 domain-containing protein 3 (351 aa).

2 coiled-coil regions span residues 1 to 21 (MDAF…QQLA) and 193 to 213 (LQLA…LGKE). Positions 31–267 (YESSDVMVID…MVTEKQHKES (237 aa)) constitute a BAR domain. Positions 281-340 (TSYFLAEVIHPFSAASEKELDLDKGDYIVVRKVSQTGWAEGECKGKAGWFPMAYIEKRQR) constitute an SH3 domain.

In terms of assembly, interacts with FREE1. Interacts (via SH3 domain) with DRP2A/ADL6. Binds to SH3P2. As to expression, detected in all tissues except seedlings.

It is found in the cytoplasmic vesicle. The protein resides in the clathrin-coated vesicle. Its function is as follows. May be involved in the recruitment of DRP2A to the accessory protein complex and in the negative regulation of its GTPase activity. The chain is SH3 domain-containing protein 3 from Arabidopsis thaliana (Mouse-ear cress).